We begin with the raw amino-acid sequence, 347 residues long: GMP reductase (347 aa).

Residue 108–131 participates in NADP(+) binding; that stretch reads AEFEKVKKIMALSEEFVFICIDIA. K(+) contacts are provided by Gly-181 and Gly-183. Cys-186 serves as the catalytic Thioimidate intermediate. Position 216 to 239 (216 to 239) interacts with NADP(+); it reads IIGDGGCSCAGDVSKAFGGGADFV.

This sequence belongs to the IMPDH/GMPR family. GuaC type 1 subfamily. Homotetramer.

It catalyses the reaction IMP + NH4(+) + NADP(+) = GMP + NADPH + 2 H(+). Catalyzes the irreversible NADPH-dependent deamination of GMP to IMP. It functions in the conversion of nucleobase, nucleoside and nucleotide derivatives of G to A nucleotides, and in maintaining the intracellular balance of A and G nucleotides. The chain is GMP reductase from Vibrio atlanticus (strain LGP32) (Vibrio splendidus (strain Mel32)).